A 981-amino-acid chain; its full sequence is Echinoderm microtubule-associated protein-like 4 (981 aa).

Position 1 is an N-acetylmethionine (M1). Disordered regions lie at residues M1 to V20 and D57 to I205. The interval M1–D249 is microtubule-binding. A phosphoserine mark is found at S7, S13, S16, and S61. A coiled-coil region spans residues A14–K63. At T96 the chain carries Phosphothreonine. Residues G114–S134 are compositionally biased toward basic and acidic residues. S134 is subject to Phosphoserine; by NEK7. Residues Q137–Q155 show a composition bias toward low complexity. S144 bears the Phosphoserine; by NEK6 mark. At S146 the chain carries Phosphoserine; by NEK7. Residue S171 is modified to Phosphoserine. Positions S176–N193 are enriched in basic and acidic residues. Residue S200 is modified to Phosphoserine. Residue T201 is modified to Phosphothreonine. Y226 is subject to Phosphotyrosine. T237 is subject to Phosphothreonine. WD repeat units follow at residues L259–Y297, T301–S348, I356–W396, A403–W438, and R445–K484. At T490 the chain carries Phosphothreonine; by NEK6. 8 WD repeats span residues Q500–H538, E543–T579, D582–S621, R625–A662, V668–V704, Y711–I750, R760–Y818, and A825–L864. At T609 the chain carries Phosphothreonine; by NEK6 and NEK7. Polar residues predominate over residues L881–I893. The segment at L881–S981 is disordered. A phosphoserine mark is found at S891 and S895. 2 positions are modified to phosphothreonine: T897 and T899. S903 is modified (phosphoserine). Over residues I916–V931 the composition is skewed to polar residues. Residues H937–S946 show a composition bias toward acidic residues. Position 978 is a phosphoserine (S978). At S981 the chain carries Phosphoserine; by NEK6 and NEK7.

The protein belongs to the WD repeat EMAP family. As to quaternary structure, homotrimer; self-association is mediated by the N-terminal coiled coil. Interacts (via WD repeats) with NUDC. Interacts with alpha- and beta-tubulin during mitosis. Phosphorylated during mitosis. Phosphorylation at Ser-144 and Ser-146 promotes its dissociation from microtubules during mitosis which is required for efficient chromosome congression.

The protein resides in the cytoplasm. It localises to the cytoskeleton. The protein localises to the spindle. It is found in the microtubule organizing center. Its subcellular location is the midbody. Functionally, essential for the formation and stability of microtubules (MTs). Required for the organization of the mitotic spindle and for the proper attachment of kinetochores to MTs. Promotes the recruitment of NUDC to the mitotic spindle for mitotic progression. The polypeptide is Echinoderm microtubule-associated protein-like 4 (EML4) (Homo sapiens (Human)).